A 337-amino-acid chain; its full sequence is Transmembrane protein 120B (337 aa).

Residues 1–39 (MSLERCQSEWTEIEQEYQQLQETHKVYRQKLEELTNLQA) are a coiled coil. The next 6 membrane-spanning stretches (helical) occupy residues 100 to 122 (GLYL…AKFA), 130 to 150 (FKLY…FLLN), 157 to 175 (IFNF…RESI), 185 to 205 (GWWV…LTWP), 268 to 288 (FLLP…VTLF), and 300 to 320 (QVFM…LTTL).

The protein belongs to the TMEM120 family.

Its subcellular location is the nucleus inner membrane. In terms of biological role, necessary for efficient adipogenesis. Does not show ion channel activity. In Danio rerio (Zebrafish), this protein is Transmembrane protein 120B (tmem120b).